Reading from the N-terminus, the 92-residue chain is Small ribosomal subunit protein uS19 (92 aa).

It belongs to the universal ribosomal protein uS19 family.

In terms of biological role, protein S19 forms a complex with S13 that binds strongly to the 16S ribosomal RNA. This Buchnera aphidicola subsp. Acyrthosiphon pisum (strain 5A) protein is Small ribosomal subunit protein uS19.